A 388-amino-acid chain; its full sequence is Na(+)/H(+) antiporter NhaA (388 aa).

The Cytoplasmic segment spans residues methionine 1–aspartate 11. Residues alanine 12–serine 31 form a helical membrane-spanning segment. Residues glycine 32–asparagine 58 lie on the Periplasmic side of the membrane. Residues methionine 59 to lysine 80 traverse the membrane as a helical segment. Over arginine 81–phenylalanine 96 the chain is Cytoplasmic. Residues proline 97 to asparagine 116 form a helical membrane-spanning segment. Topologically, residues tyrosine 117–threonine 122 are periplasmic. The helical transmembrane segment at arginine 123–alanine 130 threads the bilayer. Over alanine 131–isoleucine 154 the chain is Cytoplasmic. The chain crosses the membrane as a helical span at residues phenylalanine 155–threonine 176. At asparagine 177–serine 180 the chain is on the periplasmic side. The chain crosses the membrane as a helical span at residues methionine 181 to cysteine 200. Residues glycine 201–arginine 204 are Cytoplasmic-facing. Residues threonine 205 to serine 222 traverse the membrane as a helical segment. Glycine 223 is a topological domain (periplasmic). The chain crosses the membrane as a helical span at residues valine 224–phenylalanine 236. Residues isoleucine 237 to histidine 253 are Cytoplasmic-facing. The chain crosses the membrane as a helical span at residues valine 254–alanine 272. Residues glycine 273 to serine 286 lie on the Periplasmic side of the membrane. The chain crosses the membrane as a helical span at residues isoleucine 287 to leucine 310. The Cytoplasmic segment spans residues alanine 311–phenylalanine 339. A helical transmembrane segment spans residues threonine 340–phenylalanine 350. Topologically, residues glycine 351 to leucine 357 are periplasmic. A helical transmembrane segment spans residues isoleucine 358 to leucine 380. The Cytoplasmic portion of the chain corresponds to arginine 381–valine 388.

This sequence belongs to the NhaA Na(+)/H(+) (TC 2.A.33) antiporter family.

It is found in the cell inner membrane. It carries out the reaction Na(+)(in) + 2 H(+)(out) = Na(+)(out) + 2 H(+)(in). Na(+)/H(+) antiporter that extrudes sodium in exchange for external protons. In Shigella flexneri serotype 5b (strain 8401), this protein is Na(+)/H(+) antiporter NhaA.